The following is a 605-amino-acid chain: MLLKELSAVASPLNDQQIDQLQQAAAESSPQQLAWISGYFWGLSQTQASTHLQSVSQPGVVAAAQPAGKLTIIYASQTGNAKGVAIALKEEATAAGIAVELVSAGDYKGKNFAKETHVILIASTHGEGEAPDDAIDLHEFLQSKKAPKLPNLQYAVIGLGDSSYEFFCQTAKDFDSYLSKLGAQPMLERLDCDVDYDAPAAEWRVKALAKAKETLSTGDADVVPLPITQSQQAVSQYSKQNPYEATLLTSQKITGRHSGKDVRHIEIDLEGSGLTYQAGDALGVWYENDPELALAIVAKVGLSGEELIDVDGEHIQLVTALVSQYEITSANPQLVTKFAALSESKKLEKLVADKNKLREYSGNTQIIDVLAEKKTQLSAEQLISLLRRLTPRLYSISSSQEEVGEEVHLTVGVVEFEKGEESRQGGASSFLSHRLEEGAAVKVFVEENNNFKLPADDNTPVIMIGPGTGIAPFRAFVQERDNREAEGKNWLFFGDRTFTDDFLYQVEWQKYLKSGVVQQLDVAFSRDQVEKVYVQHRVLEHAEQVWQWLQEGAHVYVCGDMNHMAKDVHDALLTVIEQQGKQSREQAEQYLNELRKSKRYQKDVY.

Positions 70–208 (LTIIYASQTG…PAAEWRVKAL (139 aa)) constitute a Flavodoxin-like domain. FMN contacts are provided by residues 76 to 81 (SQTGNA), 123 to 126 (STHG), and 159 to 168 (LGDSSYEFFC). The FAD-binding FR-type domain occupies 240–454 (QNPYEATLLT…VEENNNFKLP (215 aa)). FAD contacts are provided by residues threonine 328, glycine 362, 392 to 395 (RLYS), 410 to 412 (TVG), and 425 to 428 (GGAS). NADP(+) is bound by residues 525 to 526 (SR), 531 to 535 (KVYVQ), and aspartate 567. Tyrosine 605 is an FAD binding site.

The protein belongs to the NADPH-dependent sulphite reductase flavoprotein subunit CysJ family. It in the N-terminal section; belongs to the flavodoxin family. This sequence in the C-terminal section; belongs to the flavoprotein pyridine nucleotide cytochrome reductase family. In terms of assembly, alpha(8)-beta(8). The alpha component is a flavoprotein, the beta component is a hemoprotein. It depends on FAD as a cofactor. FMN serves as cofactor.

It carries out the reaction hydrogen sulfide + 3 NADP(+) + 3 H2O = sulfite + 3 NADPH + 4 H(+). Its pathway is sulfur metabolism; hydrogen sulfide biosynthesis; hydrogen sulfide from sulfite (NADPH route): step 1/1. Its function is as follows. Component of the sulfite reductase complex that catalyzes the 6-electron reduction of sulfite to sulfide. This is one of several activities required for the biosynthesis of L-cysteine from sulfate. The flavoprotein component catalyzes the electron flow from NADPH -&gt; FAD -&gt; FMN to the hemoprotein component. This Photobacterium profundum (strain SS9) protein is Sulfite reductase [NADPH] flavoprotein alpha-component.